The chain runs to 545 residues: Membrane protein insertase YidC (545 aa).

6 helical membrane passes run 10 to 30 (AIYL…IFFS), 319 to 339 (LLYF…NVIP), 341 to 361 (WGLS…PLTF), 407 to 427 (LGGC…YGLV), 467 to 487 (ILPF…SNVS), and 502 to 522 (MPIM…IYWI).

The protein belongs to the OXA1/ALB3/YidC family. Type 1 subfamily. As to quaternary structure, interacts with the Sec translocase complex via SecD. Specifically interacts with transmembrane segments of nascent integral membrane proteins during membrane integration.

Its subcellular location is the cell inner membrane. Functionally, required for the insertion and/or proper folding and/or complex formation of integral membrane proteins into the membrane. Involved in integration of membrane proteins that insert both dependently and independently of the Sec translocase complex, as well as at least some lipoproteins. Aids folding of multispanning membrane proteins. The protein is Membrane protein insertase YidC of Borrelia hermsii (strain HS1 / DAH).